We begin with the raw amino-acid sequence, 109 residues long: Enhancer of rudimentary homolog (109 aa).

The protein belongs to the E(R) family. Homodimer.

In terms of biological role, may have a role in the cell cycle. This Arabidopsis thaliana (Mouse-ear cress) protein is Enhancer of rudimentary homolog.